The sequence spans 68 residues: Copper transport protein ATOX1 (68 aa).

Positions 1-63 (MPKHEFSVDM…TLNKTGKAVS (63 aa)) constitute an HMA domain. Positions 12 and 15 each coordinate Cu cation. Residue Ser47 is modified to Phosphoserine. N6-acetyllysine is present on Lys60.

This sequence belongs to the ATX1 family. In terms of assembly, homodimer. Interacts with ATP7B. Interacts with ATP7A. Interacts (via dimer form) with SLC31A1 (via C-terminal domain); this interaction improves ATOX1 stability and controls intracellular Cu(I) levels.

Binds and deliver cytosolic copper to the copper ATPase proteins. May be important in cellular antioxidant defense. The chain is Copper transport protein ATOX1 from Rattus norvegicus (Rat).